Consider the following 434-residue polypeptide: Methylenetetrahydrofolate--tRNA-(uracil-5-)-methyltransferase TrmFO (434 aa).

9–14 provides a ligand contact to FAD; that stretch reads GAGLAG.

The protein belongs to the MnmG family. TrmFO subfamily. It depends on FAD as a cofactor.

It is found in the cytoplasm. The enzyme catalyses uridine(54) in tRNA + (6R)-5,10-methylene-5,6,7,8-tetrahydrofolate + NADH + H(+) = 5-methyluridine(54) in tRNA + (6S)-5,6,7,8-tetrahydrofolate + NAD(+). It catalyses the reaction uridine(54) in tRNA + (6R)-5,10-methylene-5,6,7,8-tetrahydrofolate + NADPH + H(+) = 5-methyluridine(54) in tRNA + (6S)-5,6,7,8-tetrahydrofolate + NADP(+). Its function is as follows. Catalyzes the folate-dependent formation of 5-methyl-uridine at position 54 (M-5-U54) in all tRNAs. The polypeptide is Methylenetetrahydrofolate--tRNA-(uracil-5-)-methyltransferase TrmFO (Listeria welshimeri serovar 6b (strain ATCC 35897 / DSM 20650 / CCUG 15529 / CIP 8149 / NCTC 11857 / SLCC 5334 / V8)).